A 173-amino-acid polypeptide reads, in one-letter code: NADH-ubiquinone oxidoreductase chain 6 (173 aa).

Helical transmembrane passes span 1–21 (MTYF…AVAS), 27–47 (YGVV…MSLG), 48–68 (MSFV…VVFV), 87–107 (VVGY…VGGL), and 139–159 (CGVG…FVVL).

The protein belongs to the complex I subunit 6 family.

Its subcellular location is the mitochondrion membrane. It carries out the reaction a ubiquinone + NADH + 5 H(+)(in) = a ubiquinol + NAD(+) + 4 H(+)(out). In terms of biological role, core subunit of the mitochondrial membrane respiratory chain NADH dehydrogenase (Complex I) that is believed to belong to the minimal assembly required for catalysis. Complex I functions in the transfer of electrons from NADH to the respiratory chain. The immediate electron acceptor for the enzyme is believed to be ubiquinone. The protein is NADH-ubiquinone oxidoreductase chain 6 (MT-ND6) of Synthliboramphus antiquus (Ancient murrelet).